A 154-amino-acid polypeptide reads, in one-letter code: Ribosome maturation factor RimP (154 aa).

Belongs to the RimP family.

The protein resides in the cytoplasm. In terms of biological role, required for maturation of 30S ribosomal subunits. This chain is Ribosome maturation factor RimP, found in Alkaliphilus oremlandii (strain OhILAs) (Clostridium oremlandii (strain OhILAs)).